The chain runs to 176 residues: Large ribosomal subunit protein uL10 (176 aa).

The protein belongs to the universal ribosomal protein uL10 family. As to quaternary structure, part of the ribosomal stalk of the 50S ribosomal subunit. The N-terminus interacts with L11 and the large rRNA to form the base of the stalk. The C-terminus forms an elongated spine to which L12 dimers bind in a sequential fashion forming a multimeric L10(L12)X complex.

Forms part of the ribosomal stalk, playing a central role in the interaction of the ribosome with GTP-bound translation factors. The sequence is that of Large ribosomal subunit protein uL10 from Dehalococcoides mccartyi (strain ATCC BAA-2100 / JCM 16839 / KCTC 5957 / BAV1).